Reading from the N-terminus, the 1160-residue chain is Nonribosomal peptide synthetase fmqC (1160 aa).

The segment at 132 to 520 is adenylation; sequence TYRELNDRSS…LGEVEHALQQ (389 aa). The 78-residue stretch at 642–719 folds into the Carrier domain; the sequence is QPVTQLEESL…EMAGMLDGVT (78 aa). An O-(pantetheine 4'-phosphoryl)serine modification is found at serine 679. Positions 749 to 1025 are condensation; sequence CTLEDLQEGF…CAAAETPMRI (277 aa).

This sequence belongs to the NRP synthetase family. As to quaternary structure, interacts with the mitogen-activated protein kinase mpkA. Post-translationally, phosphorylated by mpkA during conidiogenesis.

The protein resides in the cytoplasm. It functions in the pathway alkaloid biosynthesis. Nonribosomal peptide synthetase; part of the gene cluster that mediates the biosynthesis of the antitumor fumiquinazolines that confer a dual-usage capability to defend against phagocytes in the environment and animal hosts. The simplest member is fumiquinazoline F (FQF) with a 6-6-6 tricyclic core derived from anthranilic acid (Ant), tryptophan (Trp), and alanine (Ala). The trimodular NRPS fmqA is responsible for FQF formation. Modules 1, 2 and 3 of fmqA are predicted to activate and load Ant, Trp and Ala, respectively, providing for the assembly of an Ant-Trp-Ala-S-enzyme intermediate that would undergo double cyclization for chain release and generation of the tricyclic 6-6-6 product fumiquinazoline F. The presence of an E domain predicted for module 2 of fmqA is consistent with epimerization of L-Trp to D-Trp during assembly to generate the R-stereocenter at C14 of FQF. The FAD-dependent monooxygenase fmqB and the monomodular NRPS fmqC then maturate FQF to FQA. FmqB oxidizes the 2',3'-double bond of the indole side chain of FQF, and fmqC activates L-Ala as the adenylate, installs it as the pantetheinyl thioester on its carrier protein domain, and acylates the oxidized indole for subsequent intramolecular cyclization to create the 6-5-5-imidazolindolone of FQA. The FAD-linked oxidoreductase fmqD introduces a third layer of scaffold complexity by converting FQA to the spirohemiaminal FQC, presumably by catalyzing the formation of a transient imine within the pyrazinone ring. FQC subsequently converts nonenzymatically to the known cyclic aminal FQD. The chain is Nonribosomal peptide synthetase fmqC from Aspergillus fumigatus (strain ATCC MYA-4609 / CBS 101355 / FGSC A1100 / Af293) (Neosartorya fumigata).